Consider the following 522-residue polypeptide: Ribonuclease Y (522 aa).

Residues 7–27 traverse the membrane as a helical segment; sequence STILYCLFFFFLGIAAVLAFI. In terms of domain architecture, KH spans 212–272; it reads TTSTVGVPTD…VRREVARMSL (61 aa). The 94-residue stretch at 338 to 431 folds into the HD domain; the sequence is VLRHSVEVAF…VATADACSAS (94 aa).

The protein belongs to the RNase Y family.

The protein localises to the cell membrane. In terms of biological role, endoribonuclease that initiates mRNA decay. The chain is Ribonuclease Y from Rhodopirellula baltica (strain DSM 10527 / NCIMB 13988 / SH1).